Here is a 359-residue protein sequence, read N- to C-terminus: UDP-N-acetylglucosamine--N-acetylmuramyl-(pentapeptide) pyrophosphoryl-undecaprenol N-acetylglucosamine transferase (359 aa).

UDP-N-acetyl-alpha-D-glucosamine is bound by residues 15–17 (TGG), Asn-127, Arg-166, Ser-191, Ile-245, 264–269 (ALTVSE), and Gln-290.

The protein belongs to the glycosyltransferase 28 family. MurG subfamily.

The protein resides in the cell inner membrane. The catalysed reaction is di-trans,octa-cis-undecaprenyl diphospho-N-acetyl-alpha-D-muramoyl-L-alanyl-D-glutamyl-meso-2,6-diaminopimeloyl-D-alanyl-D-alanine + UDP-N-acetyl-alpha-D-glucosamine = di-trans,octa-cis-undecaprenyl diphospho-[N-acetyl-alpha-D-glucosaminyl-(1-&gt;4)]-N-acetyl-alpha-D-muramoyl-L-alanyl-D-glutamyl-meso-2,6-diaminopimeloyl-D-alanyl-D-alanine + UDP + H(+). The protein operates within cell wall biogenesis; peptidoglycan biosynthesis. Functionally, cell wall formation. Catalyzes the transfer of a GlcNAc subunit on undecaprenyl-pyrophosphoryl-MurNAc-pentapeptide (lipid intermediate I) to form undecaprenyl-pyrophosphoryl-MurNAc-(pentapeptide)GlcNAc (lipid intermediate II). The sequence is that of UDP-N-acetylglucosamine--N-acetylmuramyl-(pentapeptide) pyrophosphoryl-undecaprenol N-acetylglucosamine transferase from Pseudomonas putida (strain W619).